Reading from the N-terminus, the 756-residue chain is Protein psiP (756 aa).

The first 23 residues, M1–G23, serve as a signal peptide directing secretion. The Extracellular segment spans residues Q24–T692. Residue N82 is glycosylated (N-linked (GlcNAc...) asparagine). The PA14 domain maps to L126–D281. 4 N-linked (GlcNAc...) asparagine glycosylation sites follow: N359, N483, N564, and N663. The chain crosses the membrane as a helical span at residues A693–G713. The Cytoplasmic segment spans residues K714–N756. Residues S730 to R744 are compositionally biased toward polar residues. The interval S730–N756 is disordered.

The protein belongs to the prespore-cell-inducing factor family.

It is found in the membrane. The chain is Protein psiP (psiP) from Dictyostelium discoideum (Social amoeba).